Consider the following 210-residue polypeptide: Protein GET1 (210 aa).

Residues M1–L4 are Lumenal-facing. The chain crosses the membrane as a helical span at residues L5–T24. Residues T25–R110 are Cytoplasmic-facing. The stretch at R43–K97 forms a coiled coil. Residues F111–F131 form a helical membrane-spanning segment. Topologically, residues E132–T155 are lumenal. A helical membrane pass occupies residues V156–A172. The Cytoplasmic portion of the chain corresponds to G173 to L210.

This sequence belongs to the WRB/GET1 family. In terms of assembly, interacts with GET3.

It localises to the endoplasmic reticulum membrane. Its function is as follows. Required for the post-translational delivery of tail-anchored (TA) proteins to the endoplasmic reticulum. Acts as a membrane receptor for soluble GET3, which recognizes and selectively binds the transmembrane domain of TA proteins in the cytosol. The sequence is that of Protein GET1 from Uncinocarpus reesii (strain UAMH 1704).